We begin with the raw amino-acid sequence, 81 residues long: Putative membrane protein insertion efficiency factor (81 aa).

It belongs to the UPF0161 family.

Its subcellular location is the cell inner membrane. Its function is as follows. Could be involved in insertion of integral membrane proteins into the membrane. The chain is Putative membrane protein insertion efficiency factor from Pseudomonas syringae pv. tomato (strain ATCC BAA-871 / DC3000).